Here is a 176-residue protein sequence, read N- to C-terminus: Isopentenyl-diphosphate Delta-isomerase (176 aa).

Mn(2+) contacts are provided by His24 and His30. A Nudix hydrolase domain is found at 28 to 160 (LLHRAFSIFV…PSAFTVWFHC (133 aa)). Cys65 is an active-site residue. His67 is a binding site for Mn(2+). Residue Glu85 participates in Mg(2+) binding. Residues Glu110 and Glu112 each contribute to the Mn(2+) site. Glu112 is an active-site residue.

This sequence belongs to the IPP isomerase type 1 family. Mg(2+) is required as a cofactor. Requires Mn(2+) as cofactor.

The protein localises to the cytoplasm. It catalyses the reaction isopentenyl diphosphate = dimethylallyl diphosphate. It functions in the pathway isoprenoid biosynthesis; dimethylallyl diphosphate biosynthesis; dimethylallyl diphosphate from isopentenyl diphosphate: step 1/1. Functionally, catalyzes the 1,3-allylic rearrangement of the homoallylic substrate isopentenyl (IPP) to its highly electrophilic allylic isomer, dimethylallyl diphosphate (DMAPP). The sequence is that of Isopentenyl-diphosphate Delta-isomerase from Burkholderia multivorans (strain ATCC 17616 / 249).